Reading from the N-terminus, the 501-residue chain is NAD(P)H-quinone oxidoreductase chain 4, chloroplastic (501 aa).

15 helical membrane passes run 4-24 (FPWLTIIVLLPISAGLLIPLL), 37-57 (LGICLVEFLLITYIFCNYFHF), 87-107 (IGLILLTGFITTLATLAAWPI), 113-130 (LSYFLMLAMYSGQVGLFA), 134-154 (ILLFFFMWELELIPVYLLLSM), 167-187 (FILYTAGSSVFLLMGALTMGL), 207-227 (IGLEIILYLGFFIAYAVKLPM), 242-262 (HYSTCMLLAGILLKMGGYGLI), 274-294 (SIFAPWLVVIGAIQIVYSALT), 310-330 (VSHMGFVLIGIGSTTDIGVNG), 331-351 (AILQMISHGLIGAALFFSAGV), 364-384 (MGGIATSIPKIFTMFSSFSMA), 385-405 (SLALPGLSGFVAELMIFLGIV), 416-436 (VVIIIVAATGIILTPIYLLSM), and 462-482 (IFIFICLFFPIIGIGFYPKLV).

Belongs to the complex I subunit 4 family.

It is found in the plastid. The protein resides in the chloroplast thylakoid membrane. The catalysed reaction is a plastoquinone + NADH + (n+1) H(+)(in) = a plastoquinol + NAD(+) + n H(+)(out). It carries out the reaction a plastoquinone + NADPH + (n+1) H(+)(in) = a plastoquinol + NADP(+) + n H(+)(out). This chain is NAD(P)H-quinone oxidoreductase chain 4, chloroplastic (ndhD), found in Anthoceros angustus (Hornwort).